Reading from the N-terminus, the 427-residue chain is Phosphomethylpyrimidine synthase (427 aa).

Substrate contacts are provided by residues Asn66, Met95, Tyr124, His163, 185–187 (SRG), 226–229 (DGLR), and Glu265. Residue His269 coordinates Zn(2+). Tyr292 is a substrate binding site. His333 is a binding site for Zn(2+). Positions 409, 412, and 416 each coordinate [4Fe-4S] cluster.

It belongs to the ThiC family. Homodimer. It depends on [4Fe-4S] cluster as a cofactor.

The enzyme catalyses 5-amino-1-(5-phospho-beta-D-ribosyl)imidazole + S-adenosyl-L-methionine = 4-amino-2-methyl-5-(phosphooxymethyl)pyrimidine + CO + 5'-deoxyadenosine + formate + L-methionine + 3 H(+). The protein operates within cofactor biosynthesis; thiamine diphosphate biosynthesis. Catalyzes the synthesis of the hydroxymethylpyrimidine phosphate (HMP-P) moiety of thiamine from aminoimidazole ribotide (AIR) in a radical S-adenosyl-L-methionine (SAM)-dependent reaction. This chain is Phosphomethylpyrimidine synthase, found in Syntrophus aciditrophicus (strain SB).